A 20-amino-acid polypeptide reads, in one-letter code: C-reactive protein (20 aa).

Residues 1-20 (SPVAASYRATAGLAGKALDF) form the Pentraxin (PTX) domain.

This sequence belongs to the pentraxin family. As to quaternary structure, homodimer; disulfide-linked. It is not known if it assembles into a pentraxin (or pentaxin) structure. Pentraxins have a discoid arrangement of 5 non-covalently bound subunits. Glycosylated.

Its subcellular location is the secreted. Displays several functions associated with host defense: it promotes agglutination, bacterial capsular swelling, phagocytosis, and complement fixation through its calcium-dependent binding to phosphorylcholine. In Mustelus canis (Smooth dogfish), this protein is C-reactive protein.